The chain runs to 396 residues: Elongation factor Tu-B (396 aa).

A tr-type G domain is found at 10–206 (KLHVNVGTIG…ALDTFIPDPT (197 aa)). The interval 19–26 (GHVDHGKT) is G1. A GTP-binding site is contributed by 19 to 26 (GHVDHGKT). Thr26 serves as a coordination point for Mg(2+). The segment at 60 to 64 (GITIS) is G2. Residues 81-84 (DCPG) form a G3 region. Residues 81 to 85 (DCPGH) and 136 to 139 (NKAD) contribute to the GTP site. Positions 136-139 (NKAD) are G4. The tract at residues 174 to 176 (SAR) is G5.

It belongs to the TRAFAC class translation factor GTPase superfamily. Classic translation factor GTPase family. EF-Tu/EF-1A subfamily. Monomer.

It localises to the cytoplasm. The enzyme catalyses GTP + H2O = GDP + phosphate + H(+). Its function is as follows. GTP hydrolase that promotes the GTP-dependent binding of aminoacyl-tRNA to the A-site of ribosomes during protein biosynthesis. The polypeptide is Elongation factor Tu-B (Xanthomonas campestris pv. campestris (strain ATCC 33913 / DSM 3586 / NCPPB 528 / LMG 568 / P 25)).